The primary structure comprises 610 residues: UvrABC system protein C (610 aa).

In terms of domain architecture, GIY-YIG spans 16-94; the sequence is SQPGVYRMYD…IKLYQPRYNV (79 aa). The region spanning 204–239 is the UVR domain; the sequence is DQVLTQLISRMETASQNLEFEEAARIRDQIQAVRRV.

This sequence belongs to the UvrC family. As to quaternary structure, interacts with UvrB in an incision complex.

It localises to the cytoplasm. Its function is as follows. The UvrABC repair system catalyzes the recognition and processing of DNA lesions. UvrC both incises the 5' and 3' sides of the lesion. The N-terminal half is responsible for the 3' incision and the C-terminal half is responsible for the 5' incision. This chain is UvrABC system protein C, found in Escherichia coli O45:K1 (strain S88 / ExPEC).